Consider the following 148-residue polypeptide: MFFAFAVLLIALATREAYGESQLNTKFILGSGNQVMFENINKEYNTHLKWDDDLAAKAMVEAVRPHYRLLWNTGDYFTIRNDKLFTKRYVGPLEEKVRLVLLNPFKKYADKLRQLPEGTTYGCNGFFDTDTMPNDNYLYVACVYNIPN.

The first 19 residues, 1–19 (MFFAFAVLLIALATREAYG), serve as a signal peptide directing secretion.

The protein to T.colubriformis 30 kDa antigenic glycoprotein.

It is found in the secreted. The protein is 15 kDa excretory/secretory protein of Haemonchus contortus (Barber pole worm).